The chain runs to 433 residues: GTPase Obg (433 aa).

Residues 1 to 159 (MAFRDVLDIE…RRVRLELRLI (159 aa)) enclose the Obg domain. The region spanning 160–327 (ADVGLVGYPN…LRQALFDLLP (168 aa)) is the OBG-type G domain. Residues 166–173 (GYPNAGKS), 191–195 (FTTLS), 214–217 (DIPG), 280–283 (NKIE), and 308–310 (SAK) each bind ATP. Mg(2+) is bound by residues S173 and T193. In terms of domain architecture, OCT spans 342-430 (PEEVREEPLT…IGSFRFEYYA (89 aa)).

Belongs to the TRAFAC class OBG-HflX-like GTPase superfamily. OBG GTPase family. In terms of assembly, monomer. It depends on Mg(2+) as a cofactor.

It localises to the cytoplasm. An essential GTPase which binds GTP, GDP and possibly (p)ppGpp with moderate affinity, with high nucleotide exchange rates and a fairly low GTP hydrolysis rate. Plays a role in control of the cell cycle, stress response, ribosome biogenesis and in those bacteria that undergo differentiation, in morphogenesis control. The polypeptide is GTPase Obg (Deinococcus geothermalis (strain DSM 11300 / CIP 105573 / AG-3a)).